The primary structure comprises 354 residues: uncharacterized protein (354 aa).

Disordered stretches follow at residues 1–74 (MGTK…ENCR) and 87–115 (SESG…QRAS). An N6-acetyllysine modification is found at lysine 19. A compositionally biased stretch (low complexity) spans 32 to 41 (EGPSSNSSFH). The segment covering 45–54 (EEGTDLEGDM) has biased composition (acidic residues). Phosphoserine occurs at positions 115 and 174. Residues 182 to 199 (QGSSQDLPMQANLSQSNE) are compositionally biased toward polar residues. Disordered stretches follow at residues 182–208 (QGSS…GRDR) and 235–298 (QVAD…DELS). Position 291 is a phosphotyrosine (tyrosine 291). Serine 292 carries the post-translational modification Phosphoserine.

This is an uncharacterized protein from Mus musculus (Mouse).